We begin with the raw amino-acid sequence, 385 residues long: Phosphatidate cytidylyltransferase, mitochondrial (385 aa).

Belongs to the TAM41 family. It depends on Mg(2+) as a cofactor. The cofactor is Co(2+). Cu(2+) is required as a cofactor.

Its subcellular location is the mitochondrion inner membrane. The enzyme catalyses a 1,2-diacyl-sn-glycero-3-phosphate + CTP + H(+) = a CDP-1,2-diacyl-sn-glycerol + diphosphate. It functions in the pathway phospholipid metabolism; CDP-diacylglycerol biosynthesis; CDP-diacylglycerol from sn-glycerol 3-phosphate: step 3/3. Functionally, catalyzes the formation of CDP-diacylglycerol (CDP-DAG) from phosphatidic acid (PA) in the mitochondrial inner membrane. Required for the biosynthesis of the dimeric phospholipid cardiolipin, which stabilizes supercomplexes of the mitochondrial respiratory chain in the mitochondrial inner membrane. This is Phosphatidate cytidylyltransferase, mitochondrial (TAM41) from Saccharomyces cerevisiae (strain ATCC 204508 / S288c) (Baker's yeast).